The following is a 2079-amino-acid chain: MKTGHRTVLLFGDVTDPWIEGIDHVYVQAAKKPWIRSFLEDLFSAIKTETKAMDRVLQEGFKDSSSFQELAERYRHAGDDFGMAHAMMIYAIRAVVLLETLSREPHILDESRPRPEVIGISGGLFSAAVMSISINFETLYAACIEAGRVWSRLCNLTLVRSRAMEESPGTWGWAILGIPAADLGKTLEQFQSSMGIHCSKRAKVGVIGDRWSTVIGPPSVLELTLSECPNLKNLPKDELNIHALQHTLSVSNSDIDYIVGNSPLLETPLPPGYRIHGLDDDFPEANYAEWRHLLRASAYQTLSRPLDIVQAVSNLNAALGVSKDIDAKIIGPSSHTTYLVKCLQTAGKEVLIQNGFPASPQTSGTNDGIAIVGMAGKGPGSDDLEEFWNVILKGLDLHEEVPSDRFNLEEYYSPKHPPAGPGRCTMTCRHGCFMNNPGHFDSKFFHISPREAMLMDPAHRLFLMNAYEALEMAGYSNGQTKSTNPTKIATFFGQCNDDWHVVGHRALGCDAYTLQAVQRAFGPGRLAFQFNWEGPTYALDSACAATSSCIHLACMSLITRDIDMAVAGAANVLSTPHSFTSLSRSGVLSDSGNCKTYRDDADGYCRADFSGAVVLKRLDDAIAQNDNILAVISSSARNHSGNSTSITTSDAAAQERLFQKVLRNARVTPQDISYVEMHGTGTQVGDKAEIGAVSSVFSKRIDGRPLNVGAIKANIGHSEAAAGMSSLLKSILMFQNSTIPPQAGMPHTLNPNFPPLHEINIQIPSEPLEFKTTDNKPRRILLNNFDAAGGNACLLLEDYTDTKERNADVRSAHTIVMSARTQSSQLLNKKRLLRWLRSKPNTRVEDLAYTTTARRMHHPIRSAIIASTTQEVIAKLEAEIERNDSSLVQRASPLVFVFTGQGSHYGGMGSELYGSSPIFRERVDLCASICAGYDFPPFLDIITNETVNVSTKNASQVQLAVLTLEMALTHFWRSAGIEPTMVIGHSLGEYAALHAAGVLSLADALYLVGHRSLLLLERCESDSCSMLSVSMSVDEVQAQLTRIRSSCNVACINSSTSTVVSGTAEDLAEFQSSITAQNAKVRAKKLSLPFAFHSFQMDPILEDYSRIAAGVTYSAPKIPVASTLLGSVVNREGIFTQEYMVQQTRQAADFMGGLVAVKSELADPLWLEVGPAPVCMSFVRDTLSTPASKMTHSLQPKTSNWMSLSKTLAAMYTSGVDIDWLAFHAPYESDLKLLTLPSYAWDVRNFWITHTDNATEVVSEQSPVTSSEPLISTCAQYLVAKSSSPNIRVALRASIADPGFMGLMDGHKMQGIGLCSGSVFCEAAFAATKYALEYSGRKNITQPWLTLHDPKLLLPLTKKSVGPDGDLVTTAVMYSSSAETISITFQVTSASASYDLGTCVVKVRDPTRSQVEWDRISYFIKARMDETIKNAKEGRGHRMQPEVFYALFGNAVEFAPDFQGINEAYIAKDFQEAAAVVTLPHDPSGTRFTFSPYWGEALVHLAGFMVNGNPSKSPKTTFIVMGFASVEQTAPLIPGKQYMTYTRISKWVKDTAYCDAIVFDPESFTIVLQCVDIRYQELPRATWKHVLEGPHETPIVHAQRPPVRNSKKYVETRELQQPSSATVPAQETTIDEPEQQEGEPAAGARLFNAILDSISKATGTDPSEFRDDTMIADLGVDSIMAIEVVATVKDVSGLELPAAFVFEYPTIGDLRKEFRANEPTVENPRFSATPSSAEASIPSSPSSLAHPMSDSASSLSPSDREEALPLERQSMTKREQKRPVKIDDDASPEPVVRIMLLQGRPGSKRIPFYMMADGTGTIATYIHLPPFKSKMPVYGIDSPFLRCPKRLTKEVGIEGVAKLIVDALMKTQPEGPLMIGGFSAGSIVAYEVCRQLGRAGRQVEGLVLIDMCCPRSSLLDEDKMNSEDDASFAIFESAVTKDGLWSSSETTQQHFRAYHVAMHAYHPPYMLEEERPTRTAVIWAEKGMVNRVMGNEKLMKMLVEQGIPMTSYPGYMEDPKLGAFACLVPDRTKADLGPNGWEKYTAGEVLTLSVAGDHLDLPMPGHVHLLHAQMEKAFAYIKG.

Residues 9–246 (LLFGDVTDPW…DELNIHALQH (238 aa)) form an N-terminal acylcarrier protein transacylase domain (SAT) region. The region spanning 366-798 (NDGIAIVGMA…GGNACLLLED (433 aa)) is the Ketosynthase family 3 (KS3) domain. Catalysis depends on for beta-ketoacyl synthase activity residues Cys-543, His-678, and His-717. The malonyl-CoA:ACP transacylase (MAT) domain stretch occupies residues 895 to 1199 (VFVFTGQGSH…MTHSLQPKTS (305 aa)). The active-site For acyl/malonyl transferase activity is the Ser-986. The interval 1268-1414 (EPLISTCAQY…DPTRSQVEWD (147 aa)) is N-terminal hotdog fold. Residues 1268–1584 (EPLISTCAQY…YQELPRATWK (317 aa)) form the PKS/mFAS DH domain. Residues 1304–1581 (MDGHKMQGIG…DIRYQELPRA (278 aa)) are product template (PT) domain. The tract at residues 1435-1584 (RGHRMQPEVF…YQELPRATWK (150 aa)) is C-terminal hotdog fold. Positions 1613 to 1639 (RELQQPSSATVPAQETTIDEPEQQEGE) are disordered. Polar residues predominate over residues 1615–1628 (LQQPSSATVPAQET). A Carrier domain is found at 1641–1718 (AAGARLFNAI…DLRKEFRANE (78 aa)). Ser-1678 carries the post-translational modification O-(pantetheine 4'-phosphoryl)serine. The tract at residues 1721-1784 (VENPRFSATP…EQKRPVKIDD (64 aa)) is disordered. Positions 1727–1757 (SATPSSAEASIPSSPSSLAHPMSDSASSLSP) are enriched in low complexity. Over residues 1758-1784 (SDREEALPLERQSMTKREQKRPVKIDD) the composition is skewed to basic and acidic residues. The interval 1812-2057 (ADGTGTIATY…LSVAGDHLDL (246 aa)) is thioesterase (TE) domain. His-2064 (for thioesterase activity) is an active-site residue.

Its pathway is mycotoxin biosynthesis. Highly reducing polyketide synthase; part of the gene cluster that mediates the biosynthesis of 10,11-dehydrocurvularin, a prevalent fungal phytotoxin with heat shock response and immune-modulatory activities. The highly reducing polyketide synthase Dhc3 is responsible for biosynthesis up to the tetraketide stage. The non-reducing polyketide synthase Dhc5 then conducts four additional chain extension cycles, producing the unreduced part of the nascent octaketide from C-1 to C-8 in 10,11-dehydrocurvularin. The protein is Non-reducing polyketide synthase Dhc5 of Alternaria cinerariae.